The following is a 120-amino-acid chain: Large ribosomal subunit protein bL19 (120 aa).

This sequence belongs to the bacterial ribosomal protein bL19 family.

Its function is as follows. This protein is located at the 30S-50S ribosomal subunit interface and may play a role in the structure and function of the aminoacyl-tRNA binding site. The sequence is that of Large ribosomal subunit protein bL19 from Cyanothece sp. (strain PCC 7425 / ATCC 29141).